The primary structure comprises 220 residues: MAREKIRIKKIDNITARQVTFSKRRRGIFKKADELSVLCDADVALIIFSATGKLFEFSSSRMRDILGRYSLHASNINKLMDPPSTHLRLENCNLSRLSKEVEDKTKQLRKLRGEDLDGLNLEELQRLEKLLESGLSRVSEKKGECVMSQIFSLEKRGSELVDENKRLRDKLETLERAKLTTLKEALETESVTTNVSSYDSGTPLEDDSDTSLKLGLPSWE.

The MADS-box domain maps to 1-61 (MAREKIRIKK…GKLFEFSSSR (61 aa)). A K-box domain is found at 87–177 (LRLENCNLSR…RDKLETLERA (91 aa)). Polar residues predominate over residues 190–200 (SVTTNVSSYDS). The interval 190-220 (SVTTNVSSYDSGTPLEDDSDTSLKLGLPSWE) is disordered.

As to quaternary structure, interacts with IMK3/MRLK. Forms a homodimer and heterodimer with SOC1, AP1 and SVP through MADS-box domain. Interacts with the SEU-LUG corepressor complex when complexed to AP1. Interacts with AGL15 and AGL16. In terms of processing, phosphorylated by IMK3. Induced by vernalization. In terms of tissue distribution, mostly expressed in shoot apical meristems, including floral meristems. Also detected in stems, seedlings, leaves, flowers and siliques, and, to a lower extent, in roots.

It localises to the nucleus. The protein resides in the cytoplasm. In terms of biological role, transcription activator that mediates floral transition in response to vernalization. Promotes inflorescence fate in apical meristems. Acts in a dosage-dependent manner. Probably involved in the transduction of RLK-mediated signaling (e.g. IMK3 pathway). Together with AP1 and SVP, controls the identity of the floral meristem and regulates expression of class B, C and E genes. When associated with SOC1, mediates effect of gibberellins on flowering under short-day conditions, and regulates the expression of LEAFY (LFY), which links floral induction and floral development. Confers inflorescence characteristics to floral primordia and early flowering. The protein is MADS-box protein AGL24 (AGL24) of Arabidopsis thaliana (Mouse-ear cress).